A 793-amino-acid polypeptide reads, in one-letter code: MPAGPVQAVPPPPPAATEPKQPTEEEASSKEDSTPSKPVVGIIYPPPEVRNIVDKTASFVARNGPEFEARIRQNEINNPKFNFLNPNDPYHAYYRHKVSEFKEGKAQEPSAAIPKVMQQQQQASQQQLPQKVQAQVIQETIVPKEPPPEFEFIADPPSISAFDLDVVKLTAQFVARNGRQFLTQLMQKEQRNYQFDFLRPQHSLFNYFTKLVEQYTKILIPPKGLFTKLKKEAENPREVLDQVCYRVEWAKFQERERKKEEEEKEKERVAYAQIDWHDFVVVETVDFQPNEQGNFPPPTTPEELGARILIQERYEKFGESEEVEMEVESDEEDEKQEKAEEPPSQLDQDTQVQDMDEGSDDEEEGQKVPPPPETPMPPPLPPTPDQVIVRKDYDPKASKPLPPAPAPDEYLVSPITGEKIPASKMQEHMRIGLLDPRWLEQRDRSIREKQSDDEVYAPGLDIESSLKQLAERRTDIFGVEETAIGKKIGEEEIQKPEEKVTWDGHSGSMARTQQAAQANITLQEQIEAIHKAKGLVPEDDTKEKIGPSKPNEIPQQPPPPSSATNIPSSAPPITSVPRPPAMPPPVRTTVVSAVPVMPRPPMASVVRLPPGSVIAPMPPIIHAPRINVVPMPPSAPPIMAPRPPPMIVPTAFVPAPPVAPVPAPAPMPPVHPPPPMEDEPASKKLKTEDSLMPEEEFLRRNKGPVSIKVQVPNMQDKTEWKLNGQVLVFTLPLTDQVSVIKVKIHEATGMPAGKQKLQYEGIFIKDSNSLAYYNMANGAVIHLALKERGGRKK.

Residues 1 to 42 form a disordered region; sequence MPAGPVQAVPPPPPAATEPKQPTEEEASSKEDSTPSKPVVGI. Lysine 20 participates in a covalent cross-link: Glycyl lysine isopeptide (Lys-Gly) (interchain with G-Cter in SUMO2). Residues 21–34 are compositionally biased toward basic and acidic residues; it reads QPTEEEASSKEDST. The SURP motif 1 repeat unit spans residues 52–94; sequence IVDKTASFVARNGPEFEARIRQNEINNPKFNFLNPNDPYHAYY. Lysine 55 carries the N6-acetyllysine modification. Lysine 131 is covalently cross-linked (Glycyl lysine isopeptide (Lys-Gly) (interchain with G-Cter in SUMO2)). The stretch at 166 to 208 is one SURP motif 2 repeat; it reads VVKLTAQFVARNGRQFLTQLMQKEQRNYQFDFLRPQHSLFNYF. Positions 318–412 are disordered; sequence GESEEVEMEV…PAPAPDEYLV (95 aa). Residues serine 320, serine 329, and serine 359 each carry the phosphoserine modification. Acidic residues-rich tracts occupy residues 320–334 and 354–364; these read SEEVEMEVESDEEDE and DMDEGSDDEEE. Residues 368-384 show a composition bias toward pro residues; sequence VPPPPETPMPPPLPPTP. Over residues 388-397 the composition is skewed to basic and acidic residues; the sequence is IVRKDYDPKA. Serine 413 is modified (phosphoserine). Lysine 424 is covalently cross-linked (Glycyl lysine isopeptide (Lys-Gly) (interchain with G-Cter in SUMO2)). Phosphoserine is present on serine 451. A Phosphotyrosine modification is found at tyrosine 456. A compositionally biased stretch (basic and acidic residues) spans 488 to 502; sequence IGEEEIQKPEEKVTW. Disordered regions lie at residues 488–518, 530–584, and 666–685; these read IGEEEIQKPEEKVTWDGHSGSMARTQQAAQA, HKAK…AMPP, and PMPPVHPPPPMEDEPASKKL. Lysine 499 participates in a covalent cross-link: Glycyl lysine isopeptide (Lys-Gly) (interchain with G-Cter in SUMO2). Serine 508 carries the post-translational modification Phosphoserine. Positions 509–518 are enriched in polar residues; that stretch reads MARTQQAAQA. Lysine 542 participates in a covalent cross-link: Glycyl lysine isopeptide (Lys-Gly) (interchain with G-Cter in SUMO2). Residues 563–572 show a composition bias toward polar residues; it reads ATNIPSSAPP. Residues 666–675 are compositionally biased toward pro residues; sequence PMPPVHPPPP. Residues 680–702 are required and sufficient for nuclear import; it reads PASKKLKTEDSLMPEEEFLRRNK. A Glycyl lysine isopeptide (Lys-Gly) (interchain with G-Cter in SUMO2) cross-link involves residue lysine 686. The Ubiquitin-like domain occupies 707–793; it reads IKVQVPNMQD…ALKERGGRKK (87 aa). At tyrosine 759 the chain carries Phosphotyrosine.

As to quaternary structure, component of the 17S U2 SnRNP complex, a ribonucleoprotein complex that contains small nuclear RNA (snRNA) U2 and a number of specific proteins. Part of the SF3A subcomplex of the 17S U2 SnRNP complex which is composed of three subunits; SF3A3/SAP61, SF3A2/SAP62 and SF3A1/SAP114. SF3A associates with the splicing factor SF3B and a 12S RNA unit to form the mature 17S U2 small nuclear ribonucleoprotein complex (17S U2 snRNP). SF3A1 functions as a scaffold that interacts directly with both SF3A2 and SF3A3. Identified in the spliceosome 'E' complex, a precursor of the spliceosome 'A' complex. Identified in the spliceosome 'A' and 'B' complexes. Identified in the spliceosome 'C' complex. Interacts with P2RX6; resulting in a reduction of the splicing activity.

The protein resides in the nucleus. It localises to the nucleus speckle. Functionally, component of the 17S U2 SnRNP complex of the spliceosome, a large ribonucleoprotein complex that removes introns from transcribed pre-mRNAs. The 17S U2 SnRNP complex (1) directly participates in early spliceosome assembly and (2) mediates recognition of the intron branch site during pre-mRNA splicing by promoting the selection of the pre-mRNA branch-site adenosine, the nucleophile for the first step of splicing. Within the 17S U2 SnRNP complex, SF3A1 is part of the SF3A subcomplex that contributes to the assembly of the 17S U2 snRNP, and the subsequent assembly of the pre-spliceosome 'E' complex and the pre-catalytic spliceosome 'A' complex. Involved in pre-mRNA splicing as a component of pre-catalytic spliceosome 'B' complexes. The polypeptide is Splicing factor 3A subunit 1 (SF3A1) (Bos taurus (Bovine)).